We begin with the raw amino-acid sequence, 304 residues long: UDP-3-O-acyl-N-acetylglucosamine deacetylase (304 aa).

Zn(2+) contacts are provided by His-78, His-237, and Asp-241. His-264 acts as the Proton donor in catalysis.

Belongs to the LpxC family. Zn(2+) is required as a cofactor.

It catalyses the reaction a UDP-3-O-[(3R)-3-hydroxyacyl]-N-acetyl-alpha-D-glucosamine + H2O = a UDP-3-O-[(3R)-3-hydroxyacyl]-alpha-D-glucosamine + acetate. It functions in the pathway glycolipid biosynthesis; lipid IV(A) biosynthesis; lipid IV(A) from (3R)-3-hydroxytetradecanoyl-[acyl-carrier-protein] and UDP-N-acetyl-alpha-D-glucosamine: step 2/6. Its function is as follows. Catalyzes the hydrolysis of UDP-3-O-myristoyl-N-acetylglucosamine to form UDP-3-O-myristoylglucosamine and acetate, the committed step in lipid A biosynthesis. The sequence is that of UDP-3-O-acyl-N-acetylglucosamine deacetylase from Thioalkalivibrio sulfidiphilus (strain HL-EbGR7).